The sequence spans 320 residues: tRNA pseudouridine synthase B (320 aa).

Asp-41 serves as the catalytic Nucleophile. Disordered stretches follow at residues 116–136 (PPQVSAVHVQGERAHARARRG) and 259–284 (DQCQPAPKPLASDQQESAPNQTDPSA). The segment covering 125-136 (QGERAHARARRG) has biased composition (basic and acidic residues). Residues 270–284 (SDQQESAPNQTDPSA) show a composition bias toward polar residues.

It belongs to the pseudouridine synthase TruB family. Type 1 subfamily.

It carries out the reaction uridine(55) in tRNA = pseudouridine(55) in tRNA. Responsible for synthesis of pseudouridine from uracil-55 in the psi GC loop of transfer RNAs. This Prochlorococcus marinus (strain MIT 9313) protein is tRNA pseudouridine synthase B.